Reading from the N-terminus, the 183-residue chain is Large ribosomal subunit protein uL5 (183 aa).

It belongs to the universal ribosomal protein uL5 family. In terms of assembly, part of the 50S ribosomal subunit; part of the 5S rRNA/L5/L18/L25 subcomplex. Contacts the 5S rRNA and the P site tRNA. Forms a bridge to the 30S subunit in the 70S ribosome.

Functionally, this is one of the proteins that bind and probably mediate the attachment of the 5S RNA into the large ribosomal subunit, where it forms part of the central protuberance. In the 70S ribosome it contacts protein S13 of the 30S subunit (bridge B1b), connecting the 2 subunits; this bridge is implicated in subunit movement. Contacts the P site tRNA; the 5S rRNA and some of its associated proteins might help stabilize positioning of ribosome-bound tRNAs. The polypeptide is Large ribosomal subunit protein uL5 (Leptospira biflexa serovar Patoc (strain Patoc 1 / Ames)).